The following is a 96-amino-acid chain: Large ribosomal subunit protein eL14 (96 aa).

It belongs to the eukaryotic ribosomal protein eL14 family.

The protein is Large ribosomal subunit protein eL14 of Staphylothermus marinus (strain ATCC 43588 / DSM 3639 / JCM 9404 / F1).